A 416-amino-acid polypeptide reads, in one-letter code: UDP-N-acetylglucosamine 1-carboxyvinyltransferase (416 aa).

A phosphoenolpyruvate-binding site is contributed by 22–23; that stretch reads KN. Arg-92 contacts UDP-N-acetyl-alpha-D-glucosamine. The Proton donor role is filled by Cys-116. The residue at position 116 (Cys-116) is a 2-(S-cysteinyl)pyruvic acid O-phosphothioketal. UDP-N-acetyl-alpha-D-glucosamine is bound by residues 121–125, Asp-304, and Ile-326; that span reads RPVDQ.

It belongs to the EPSP synthase family. MurA subfamily.

The protein resides in the cytoplasm. It catalyses the reaction phosphoenolpyruvate + UDP-N-acetyl-alpha-D-glucosamine = UDP-N-acetyl-3-O-(1-carboxyvinyl)-alpha-D-glucosamine + phosphate. It participates in cell wall biogenesis; peptidoglycan biosynthesis. Cell wall formation. Adds enolpyruvyl to UDP-N-acetylglucosamine. This Cupriavidus metallidurans (strain ATCC 43123 / DSM 2839 / NBRC 102507 / CH34) (Ralstonia metallidurans) protein is UDP-N-acetylglucosamine 1-carboxyvinyltransferase.